The sequence spans 101 residues: NAD(P)H-quinone oxidoreductase subunit 4L, chloroplastic (101 aa).

3 consecutive transmembrane segments (helical) span residues 2-22 (ILEHVLVLSAYLFSIGIYGLI), 32-52 (MCLELILNAVNINFVTFSDFF), and 61-81 (IFSIFVIAIAAAEAAIGPAIL).

It belongs to the complex I subunit 4L family. In terms of assembly, NDH is composed of at least 16 different subunits, 5 of which are encoded in the nucleus.

Its subcellular location is the plastid. It localises to the chloroplast thylakoid membrane. It catalyses the reaction a plastoquinone + NADH + (n+1) H(+)(in) = a plastoquinol + NAD(+) + n H(+)(out). The catalysed reaction is a plastoquinone + NADPH + (n+1) H(+)(in) = a plastoquinol + NADP(+) + n H(+)(out). Its function is as follows. NDH shuttles electrons from NAD(P)H:plastoquinone, via FMN and iron-sulfur (Fe-S) centers, to quinones in the photosynthetic chain and possibly in a chloroplast respiratory chain. The immediate electron acceptor for the enzyme in this species is believed to be plastoquinone. Couples the redox reaction to proton translocation, and thus conserves the redox energy in a proton gradient. The protein is NAD(P)H-quinone oxidoreductase subunit 4L, chloroplastic of Platanus occidentalis (Sycamore).